A 290-amino-acid polypeptide reads, in one-letter code: Fat storage-inducing transmembrane protein 1 (290 aa).

Over 1–18 (MERGPVVGAGLGARARIR) the chain is Lumenal. The chain crosses the membrane as a helical span at residues 19–39 (TLLGCLVKVLLWVASALLYFG). Residues 40–54 (SEQAARLLGSPCLRR) lie on the Cytoplasmic side of the membrane. Residues 55-75 (LYHAWLAAVVIFGPLLQFHVN) traverse the membrane as a helical segment. Residues 76-94 (PRTIFASHGNFFNIKFVNS) lie on the Lumenal side of the membrane. A helical membrane pass occupies residues 95–115 (AWGWTCTFLGGFVLLVVFLAT). Residues 116 to 141 (RRVAVTARHLSRLVVGAAVWRGAGRA) are Cytoplasmic-facing. Residues 142–162 (FLLIEDLTGSCFEPLPQGLLL) traverse the membrane as a helical segment. At 163 to 187 (HELPDRRSRLAAGHQWRGYTVSSHT) the chain is on the lumenal side. H186 is a catalytic residue. The chain crosses the membrane as a helical span at residues 188 to 208 (FLLTFCCLLMAEEAAVFAKYL). The Cytoplasmic segment spans residues 209–220 (AHGLPAGAPLRL). Residues 221–241 (VFLLNVLLLGLWNFLLLCTVI) traverse the membrane as a helical segment. Over 242–249 (YFHQYTHK) the chain is Lumenal. The active site involves H244. The chain crosses the membrane as a helical span at residues 250 to 270 (VVGAAVGTFAWYLTYGSWYHQ). The Cytoplasmic portion of the chain corresponds to 271–290 (PWSPGSPGHGLFTHPSRKHN).

This sequence belongs to the FIT family. FIT1 subfamily.

The protein localises to the endoplasmic reticulum membrane. Plays an important role in the formation of lipid droplets (LDs) which are storage organelles at the center of lipid and energy homeostasis. Directly binds to diacylglycerol (DAGs) and triacylglycerol. The protein is Fat storage-inducing transmembrane protein 1 of Sus scrofa (Pig).